The sequence spans 264 residues: Large ribosomal subunit protein uL2 (264 aa).

It belongs to the universal ribosomal protein uL2 family.

It localises to the cytoplasm. The sequence is that of Large ribosomal subunit protein uL2 (RPL8) from Tetrahymena thermophila (strain SB210).